We begin with the raw amino-acid sequence, 218 residues long: MGNITAKLVKDLRDKTGAGMMDCKKALNETEGNLDKALEWLRKKGIASAEKKSGRVAAEGSIGSYIHTGSRVGVLLELNCETDFVARGDIFQSLLKDVSMQVAACPNVEYVSIDEIPEEVVEKEKQIEMGRDDLSGKPEQIKEKIVEGRIAKRLNELVLLSQPYIKDSSLTVEDLVKQAAAKIGENIKVRRFTRYTLGEGIEKNQIDFAEEVASMQTN.

The segment at 82-85 (TDFV) is involved in Mg(2+) ion dislocation from EF-Tu.

It belongs to the EF-Ts family.

It is found in the cytoplasm. Associates with the EF-Tu.GDP complex and induces the exchange of GDP to GTP. It remains bound to the aminoacyl-tRNA.EF-Tu.GTP complex up to the GTP hydrolysis stage on the ribosome. The chain is Elongation factor Ts from Prochlorococcus marinus (strain MIT 9301).